Here is a 242-residue protein sequence, read N- to C-terminus: Eukaryotic translation initiation factor 4E type 1B (242 aa).

The tract at residues 1-42 is disordered; the sequence is MLAVEVSEAEGGIREWEEEEKEEEAAERTPTGEKSPNSPRTL. Acidic residues predominate over residues 16-25; sequence WEEEEKEEEA. A compositionally biased stretch (polar residues) spans 32–41; that stretch reads GEKSPNSPRT. An EIF4EBP1/2/3 binding region spans residues 62-65; it reads HPLQ. MRNA is bound at residue 81–82; it reads WQ. Residues 98-102 form an EIF4EBP1/2/3 binding region; it reads WALYS. MRNA is bound at residue 127 to 128; it reads WE. Residues 157 to 164 form an EIF4EBP1/2/3 binding region; sequence ETLLCLIG. Residues 182–187 and 230–232 each bind mRNA; these read RTKGDK and TKS.

Belongs to the eukaryotic initiation factor 4E family. EIF4F is a multi-subunit complex, the composition of which varies with external and internal environmental conditions. It is composed of at least EIF4A, EIF4E and EIF4G.

In terms of biological role, recognizes and binds the 7-methylguanosine-containing mRNA cap during an early step in the initiation of protein synthesis and facilitates ribosome binding by inducing the unwinding of the mRNAs secondary structure. The protein is Eukaryotic translation initiation factor 4E type 1B (EIF4E1B) of Homo sapiens (Human).